Reading from the N-terminus, the 120-residue chain is Immunogenic miracidial antigen 5D (120 aa).

The tract at residues 41–120 is disordered; it reads HIDVGDEDYH…PKKYGSGYKH (80 aa). Acidic residues predominate over residues 45 to 66; that stretch reads GDEDYHDGDDDVDYTDDVDDVD.

This sequence belongs to the immunogenic miracidial antigen family.

This chain is Immunogenic miracidial antigen 5D (5D), found in Schistosoma japonicum (Blood fluke).